A 1204-amino-acid chain; its full sequence is MGENPAKSHYAQLNLGEENEMEIFGYKTQCCRKALCIAGYILSCGALLLLFYWKPEWDVWANCVPCSLEEADVVLLRTTDEFRIYSRKNVTWISVSGIIKSRLDYPSFAEEDSIFSKALMKPSLQVKSIQVQKIRYVWNIYAKQFQKVGALEDHHTCSAIHTKFGSGLTCSEQSLRRVICGPNTIDVPVIPIWKLLIKEVLNPFYVFQLFSVCLWFAEDYMEYAAAIIIMSPLSISLTVYDLRQQSVKLQRLVESHNSIMVTGRNKEGFQELESHHLVPGDMVVLKEGKALLPCDAILISGQCIVNESMLTGESIPVTKTQLPQADNLKPWKMHCAEDYKKHVLFCGTEVIQTKGDDRGVVKAVVLQTGFNTAKGDLVRSILYPKPMNFRLYRDALRFLMCLIAFAAIGMIYTVCVFALNGEEAGEVVKKALDVITIAVPPALPAALTTGIIYTQRRLKKKGIFCISPQRINMCGQLNLICFDKTGTLTEDGLDLWGLLPSEGNCFQDVRRFPADHSLPWGPAFRAMVVCHSLIVLEGKIQGDPLDVKMFEATNWVIDDSSGHQIEGQRSTHATVIRPGPKANTASVDGITILHQFPFSSALQRMSVIAQETGGEKQAFTKGAPEMVATLCRAETVPSNFESKLLFYTAQGFRVIGLAYKSLQSGKQSTDLTREEVESDLTFLGLLIMENRLKRETKPVLEELSAAHIRSVMVTGDNIQTAVTVAKNAGMISPTNRVILVEANKIPGSFSASVTWKPLKENKTEDDGNLDSGSQTGRRIRLAAEPGQFHFAMSGKSYQVVAQYFSHLLPKLLLNATVFARMSPSQKSSLVEEFQKLDYFVGMCGDGANDCGALKVAHAGISLSEQEASVASPFTSRTPSIACVPELIREGRAALVTSFCMFKYMALYSTIQYLGVLLLYWQLNSFGNYQFLFQDLAITTVIGMTMSFTEAYPKLVPYRPPSQLVSPPLLLSVILNILFSLGMQILGFLMVQKQPWYSKTDIHSACLSVNNHVENSSSASSLGLHGVGGGDPTEVDNGYKSYENTTVWLLSTINCLIIALVFSKGKPFRQPIYTNYVFIMVLVGQLGVCLFLVFADIDDLYSKMDLVCTPTTWRISMVMMLAVTLAVSFLVEEAIIENRALWLWLKKTFQYHSKSHYKRLQRVLEQDSAWPPLNETFSLDAVTVSVEEDMEGHSNPTFDSNEDAL.

Topologically, residues 1–32 are cytoplasmic; the sequence is MGENPAKSHYAQLNLGEENEMEIFGYKTQCCR. A helical transmembrane segment spans residues 33-53; that stretch reads KALCIAGYILSCGALLLLFYW. Topologically, residues 54-219 are extracellular; that stretch reads KPEWDVWANC…FSVCLWFAED (166 aa). A helical membrane pass occupies residues 220 to 242; sequence YMEYAAAIIIMSPLSISLTVYDL. Residues 243 to 397 lie on the Cytoplasmic side of the membrane; the sequence is RQQSVKLQRL…NFRLYRDALR (155 aa). Residues 398-418 form a helical membrane-spanning segment; that stretch reads FLMCLIAFAAIGMIYTVCVFA. The Extracellular segment spans residues 419–433; sequence LNGEEAGEVVKKALD. A helical transmembrane segment spans residues 434-454; the sequence is VITIAVPPALPAALTTGIIYT. The Cytoplasmic segment spans residues 455 to 897; that stretch reads QRRLKKKGIF…REGRAALVTS (443 aa). Asp483 (4-aspartylphosphate intermediate) is an active-site residue. The Mg(2+) site is built by Asp845 and Asp849. A helical transmembrane segment spans residues 898–918; it reads FCMFKYMALYSTIQYLGVLLL. At 919–929 the chain is on the extracellular side; the sequence is YWQLNSFGNYQ. The helical transmembrane segment at 930 to 950 threads the bilayer; sequence FLFQDLAITTVIGMTMSFTEA. Over 951-967 the chain is Cytoplasmic; the sequence is YPKLVPYRPPSQLVSPP. A helical transmembrane segment spans residues 968-988; it reads LLLSVILNILFSLGMQILGFL. Topologically, residues 989–1043 are extracellular; that stretch reads MVQKQPWYSKTDIHSACLSVNNHVENSSSASSLGLHGVGGGDPTEVDNGYKSYEN. A helical membrane pass occupies residues 1044 to 1064; that stretch reads TTVWLLSTINCLIIALVFSKG. Residues 1065-1075 lie on the Cytoplasmic side of the membrane; the sequence is KPFRQPIYTNY. A helical transmembrane segment spans residues 1076 to 1096; it reads VFIMVLVGQLGVCLFLVFADI. The Extracellular segment spans residues 1097 to 1113; it reads DDLYSKMDLVCTPTTWR. Residues 1114-1134 form a helical membrane-spanning segment; it reads ISMVMMLAVTLAVSFLVEEAI. Topologically, residues 1135 to 1204 are cytoplasmic; that stretch reads IENRALWLWL…PTFDSNEDAL (70 aa).

Belongs to the cation transport ATPase (P-type) (TC 3.A.3) family. Type V subfamily.

It localises to the membrane. The catalysed reaction is ATP + H2O = ADP + phosphate + H(+). The polypeptide is Probable cation-transporting ATPase 13A4 (ATP13A4) (Gallus gallus (Chicken)).